Here is an 80-residue protein sequence, read N- to C-terminus: Defensin-like protein 276 (80 aa).

The first 24 residues, 1–24 (MSGQKYQLVSLLLIICLLFSQSTA), serve as a signal peptide directing secretion. Intrachain disulfides connect cysteine 27–cysteine 67, cysteine 33–cysteine 55, cysteine 39–cysteine 65, and cysteine 43–cysteine 66.

The protein belongs to the DEFL family.

It is found in the secreted. The polypeptide is Defensin-like protein 276 (Arabidopsis thaliana (Mouse-ear cress)).